A 254-amino-acid polypeptide reads, in one-letter code: K88 minor fimbrial subunit FaeI (254 aa).

The first 20 residues, 1 to 20, serve as a signal peptide directing secretion; that stretch reads MKKVTLFLFVVSLLPSTVLA.

The protein belongs to the fimbrial K88 protein family.

The protein localises to the fimbrium. In terms of biological role, K88 minor fimbrial subunit, plays an essential role in the biogenesis of the K88 fimbriae. Fimbriae (also called pili), are polar filaments radiating from the surface of the bacterium to a length of 0.5-1.5 micrometers and numbering 100-300 per cell. They enable bacteria to colonize the epithelium of specific host organs. This chain is K88 minor fimbrial subunit FaeI (faeI), found in Escherichia coli.